The primary structure comprises 216 residues: 3-isopropylmalate dehydratase small subunit 2 (216 aa).

Belongs to the LeuD family. LeuD type 1 subfamily. Heterodimer of LeuC and LeuD.

It carries out the reaction (2R,3S)-3-isopropylmalate = (2S)-2-isopropylmalate. It functions in the pathway amino-acid biosynthesis; L-leucine biosynthesis; L-leucine from 3-methyl-2-oxobutanoate: step 2/4. Its function is as follows. Catalyzes the isomerization between 2-isopropylmalate and 3-isopropylmalate, via the formation of 2-isopropylmaleate. The protein is 3-isopropylmalate dehydratase small subunit 2 of Bordetella pertussis (strain Tohama I / ATCC BAA-589 / NCTC 13251).